Reading from the N-terminus, the 331-residue chain is 4-hydroxy-3-methylbut-2-enyl diphosphate reductase (331 aa).

C12 lines the [4Fe-4S] cluster pocket. (2E)-4-hydroxy-3-methylbut-2-enyl diphosphate is bound by residues H43 and H81. Dimethylallyl diphosphate-binding residues include H43 and H81. H43 and H81 together coordinate isopentenyl diphosphate. C103 contributes to the [4Fe-4S] cluster binding site. H131 is a (2E)-4-hydroxy-3-methylbut-2-enyl diphosphate binding site. H131 contributes to the dimethylallyl diphosphate binding site. Residue H131 participates in isopentenyl diphosphate binding. E133 acts as the Proton donor in catalysis. T170 is a binding site for (2E)-4-hydroxy-3-methylbut-2-enyl diphosphate. Residue C198 participates in [4Fe-4S] cluster binding. Residues S226, N228, and S271 each coordinate (2E)-4-hydroxy-3-methylbut-2-enyl diphosphate. Dimethylallyl diphosphate-binding residues include S226, N228, and S271. Isopentenyl diphosphate-binding residues include S226, N228, and S271.

The protein belongs to the IspH family. The cofactor is [4Fe-4S] cluster.

The enzyme catalyses isopentenyl diphosphate + 2 oxidized [2Fe-2S]-[ferredoxin] + H2O = (2E)-4-hydroxy-3-methylbut-2-enyl diphosphate + 2 reduced [2Fe-2S]-[ferredoxin] + 2 H(+). It carries out the reaction dimethylallyl diphosphate + 2 oxidized [2Fe-2S]-[ferredoxin] + H2O = (2E)-4-hydroxy-3-methylbut-2-enyl diphosphate + 2 reduced [2Fe-2S]-[ferredoxin] + 2 H(+). The protein operates within isoprenoid biosynthesis; dimethylallyl diphosphate biosynthesis; dimethylallyl diphosphate from (2E)-4-hydroxy-3-methylbutenyl diphosphate: step 1/1. Its pathway is isoprenoid biosynthesis; isopentenyl diphosphate biosynthesis via DXP pathway; isopentenyl diphosphate from 1-deoxy-D-xylulose 5-phosphate: step 6/6. In terms of biological role, catalyzes the conversion of 1-hydroxy-2-methyl-2-(E)-butenyl 4-diphosphate (HMBPP) into a mixture of isopentenyl diphosphate (IPP) and dimethylallyl diphosphate (DMAPP). Acts in the terminal step of the DOXP/MEP pathway for isoprenoid precursor biosynthesis. The protein is 4-hydroxy-3-methylbut-2-enyl diphosphate reductase of Listeria monocytogenes serotype 4b (strain CLIP80459).